A 607-amino-acid polypeptide reads, in one-letter code: Chaperone protein DnaK (607 aa).

Threonine 173 carries the post-translational modification Phosphothreonine; by autocatalysis. Residues 577 to 588 (AQAQQGAEGAAS) show a composition bias toward low complexity. A disordered region spans residues 577 to 607 (AQAQQGAEGAASQDDDVVDADFTEVKDDDNK). Residues 589–598 (QDDDVVDADF) are compositionally biased toward acidic residues.

Belongs to the heat shock protein 70 family.

Its function is as follows. Acts as a chaperone. This is Chaperone protein DnaK from Macrococcus caseolyticus (strain JCSC5402) (Macrococcoides caseolyticum).